A 435-amino-acid chain; its full sequence is Ribulose bisphosphate carboxylase large chain (435 aa).

Positions 104 and 154 each coordinate substrate. K156 acts as the Proton acceptor in catalysis. K158 contributes to the substrate binding site. Mg(2+) is bound by residues K182, D184, and E185. An N6-carboxylysine modification is found at K182. H275 (proton acceptor) is an active-site residue. 3 residues coordinate substrate: R276, H308, and S360.

Belongs to the RuBisCO large chain family. Type I subfamily. Heterohexadecamer of 8 large chains and 8 small chains. Requires Mg(2+) as cofactor.

It is found in the plastid. Its subcellular location is the chloroplast. It carries out the reaction 2 (2R)-3-phosphoglycerate + 2 H(+) = D-ribulose 1,5-bisphosphate + CO2 + H2O. It catalyses the reaction D-ribulose 1,5-bisphosphate + O2 = 2-phosphoglycolate + (2R)-3-phosphoglycerate + 2 H(+). RuBisCO catalyzes two reactions: the carboxylation of D-ribulose 1,5-bisphosphate, the primary event in carbon dioxide fixation, as well as the oxidative fragmentation of the pentose substrate in the photorespiration process. Both reactions occur simultaneously and in competition at the same active site. This Euglena pisciformis protein is Ribulose bisphosphate carboxylase large chain.